We begin with the raw amino-acid sequence, 119 residues long: Large ribosomal subunit protein bL20 (119 aa).

The protein belongs to the bacterial ribosomal protein bL20 family.

Binds directly to 23S ribosomal RNA and is necessary for the in vitro assembly process of the 50S ribosomal subunit. It is not involved in the protein synthesizing functions of that subunit. This chain is Large ribosomal subunit protein bL20, found in Acidovorax sp. (strain JS42).